Here is a 307-residue protein sequence, read N- to C-terminus: Protease HtpX homolog (307 aa).

Residues 16 to 36 (LFMGVGYLIGGAAGAMIALVV) traverse the membrane as a helical segment. Histidine 130 is a Zn(2+) binding site. Glutamate 131 is an active-site residue. Position 134 (histidine 134) interacts with Zn(2+). A run of 2 helical transmembrane segments spans residues 145–165 (ITAT…FFGG) and 172–192 (GPGI…AMLV). Glutamate 201 is a Zn(2+) binding site. Residues 278–307 (AGQSGSATPDPAPAPRGPWNGGAPRRGPWG) are disordered.

It belongs to the peptidase M48B family. The cofactor is Zn(2+).

Its subcellular location is the cell inner membrane. The protein is Protease HtpX homolog of Nitrobacter hamburgensis (strain DSM 10229 / NCIMB 13809 / X14).